The chain runs to 576 residues: Proline--tRNA ligase (576 aa).

Belongs to the class-II aminoacyl-tRNA synthetase family. ProS type 1 subfamily. In terms of assembly, homodimer.

It localises to the cytoplasm. The catalysed reaction is tRNA(Pro) + L-proline + ATP = L-prolyl-tRNA(Pro) + AMP + diphosphate. Functionally, catalyzes the attachment of proline to tRNA(Pro) in a two-step reaction: proline is first activated by ATP to form Pro-AMP and then transferred to the acceptor end of tRNA(Pro). As ProRS can inadvertently accommodate and process non-cognate amino acids such as alanine and cysteine, to avoid such errors it has two additional distinct editing activities against alanine. One activity is designated as 'pretransfer' editing and involves the tRNA(Pro)-independent hydrolysis of activated Ala-AMP. The other activity is designated 'posttransfer' editing and involves deacylation of mischarged Ala-tRNA(Pro). The misacylated Cys-tRNA(Pro) is not edited by ProRS. The polypeptide is Proline--tRNA ligase (Pelobacter propionicus (strain DSM 2379 / NBRC 103807 / OttBd1)).